Reading from the N-terminus, the 434-residue chain is E3 ubiquitin-protein ligase siah-1 (434 aa).

Positions 27–88 are disordered; the sequence is FEEDENAGPE…NGNTPSVTIP (62 aa). Over residues 43–55 the composition is skewed to low complexity; sequence SSSSASSQRSSAS. Polar residues predominate over residues 74-88; sequence MSNNQNGNTPSVTIP. Residues 171–206 form an RING-type; degenerate zinc finger; that stretch reads CPVCLEYMLPPYMQCPSGHLVCSNCRPKLQCCPTCR. Positions 220–415 are SBD; it reads IANTVRFPCK…LGINVTISRI (196 aa). The segment at 223 to 283 adopts an SIAH-type; degenerate zinc-finger fold; sequence TVRFPCKFSN…VMDHLKKVHK (61 aa). Residues C228, C235, H247, C251, C258, C265, H277, and H282 each contribute to the Zn(2+) site.

This sequence belongs to the SINA (Seven in absentia) family. In terms of assembly, interacts with tir-1.

The enzyme catalyses S-ubiquitinyl-[E2 ubiquitin-conjugating enzyme]-L-cysteine + [acceptor protein]-L-lysine = [E2 ubiquitin-conjugating enzyme]-L-cysteine + N(6)-ubiquitinyl-[acceptor protein]-L-lysine.. It functions in the pathway protein modification; protein ubiquitination. In terms of biological role, E3 ubiquitin-protein ligase that mediates ubiquitination and subsequent proteasomal degradation of target proteins. E3 ubiquitin ligases accept ubiquitin from an E2 ubiquitin-conjugating enzyme in the form of a thioester and then directly transfers the ubiquitin to targeted substrates. It probably triggers the ubiquitin-mediated degradation of different substrates. The polypeptide is E3 ubiquitin-protein ligase siah-1 (Caenorhabditis briggsae).